Reading from the N-terminus, the 448-residue chain is Beta-glucosidase B (448 aa).

The Proton donor role is filled by E167. Catalysis depends on E356, which acts as the Nucleophile.

This sequence belongs to the glycosyl hydrolase 1 family.

The enzyme catalyses Hydrolysis of terminal, non-reducing beta-D-glucosyl residues with release of beta-D-glucose.. The polypeptide is Beta-glucosidase B (bglB) (Paenibacillus polymyxa (Bacillus polymyxa)).